The following is a 206-amino-acid chain: Large ribosomal subunit protein uL4 (206 aa).

Positions 45–78 are disordered; sequence QGNRAQKDREQVKHTTKKPWRQKGTGRARAGMSS. A compositionally biased stretch (basic residues) spans 58-70; the sequence is HTTKKPWRQKGTG.

Belongs to the universal ribosomal protein uL4 family. As to quaternary structure, part of the 50S ribosomal subunit.

In terms of biological role, one of the primary rRNA binding proteins, this protein initially binds near the 5'-end of the 23S rRNA. It is important during the early stages of 50S assembly. It makes multiple contacts with different domains of the 23S rRNA in the assembled 50S subunit and ribosome. Forms part of the polypeptide exit tunnel. This chain is Large ribosomal subunit protein uL4, found in Burkholderia ambifaria (strain MC40-6).